Reading from the N-terminus, the 380-residue chain is O-phospho-L-seryl-tRNA:Cys-tRNA synthase (380 aa).

Pyridoxal 5'-phosphate-binding positions include 86 to 87, Asn-192, and 215 to 217; these read AR and SGH. Position 218 is an N6-(pyridoxal phosphate)lysine (Lys-218).

This sequence belongs to the SepCysS family. In terms of assembly, homodimer. Interacts with SepRS. Requires pyridoxal 5'-phosphate as cofactor.

It carries out the reaction O-phospho-L-seryl-tRNA(Cys) + hydrogen sulfide + H(+) = L-cysteinyl-tRNA(Cys) + phosphate. In terms of biological role, converts O-phospho-L-seryl-tRNA(Cys) (Sep-tRNA(Cys)) to L-cysteinyl-tRNA(Cys) (Cys-tRNA(Cys)). The sequence is that of O-phospho-L-seryl-tRNA:Cys-tRNA synthase from Methanococcus maripaludis (strain C5 / ATCC BAA-1333).